The primary structure comprises 318 residues: 26 kDa endochitinase 1 (318 aa).

The signal sequence occupies residues 1 to 19; that stretch reads MRAFVLFAVVAMAATMAVA. The region spanning 20-59 is the Chitin-binding type-1 domain; the sequence is EQCGSQAGGATCPNCLCCSRFGWCGSTPYCGDGCQSQCSG. 7 disulfides stabilise this stretch: C22–C37, C31–C43, C36–C49, C53–C57, C98–C160, C172–C180, and C279–C311. Residue E142 is the Proton donor of the active site.

Belongs to the glycosyl hydrolase 19 family. Chitinase class I subfamily.

The catalysed reaction is Random endo-hydrolysis of N-acetyl-beta-D-glucosaminide (1-&gt;4)-beta-linkages in chitin and chitodextrins.. In terms of biological role, defense against chitin-containing fungal pathogens. The protein is 26 kDa endochitinase 1 of Hordeum vulgare (Barley).